We begin with the raw amino-acid sequence, 168 residues long: RxLR effector protein CRE8 (168 aa).

Residues 1-23 (MRLPSILVVAASTLFLHYGYTSA) form the signal peptide. The short motif at 54–69 (RFLRDGKIAEGDNEER) is the RxLR-dEER element.

The protein belongs to the RxLR effector family.

The protein resides in the secreted. The protein localises to the host cell. In terms of biological role, effector that is involved in host plant infection. Contributes to virulence during the early infection stage, by inhibiting plant defense responses induced by both PAMP-triggered immunity (PTI) and effector-triggered immunity (ETI). This chain is RxLR effector protein CRE8, found in Phytophthora infestans (strain T30-4) (Potato late blight agent).